A 137-amino-acid polypeptide reads, in one-letter code: Gonadotropin subunit beta-1 (137 aa).

A signal peptide spans 1-24 (MYCTHLKTLQLVVMATLWVTPVRA). Intrachain disulfides connect Cys-32/Cys-78, Cys-46/Cys-93, Cys-55/Cys-108, Cys-59/Cys-110, and Cys-113/Cys-120. An N-linked (GlcNAc...) asparagine glycan is attached at Asn-36.

It belongs to the glycoprotein hormones subunit beta family. Heterodimer of an alpha and a beta chain.

It is found in the secreted. Its function is as follows. Involved in gametogenesis and steroidogenesis. The protein is Gonadotropin subunit beta-1 (cgba) of Oncorhynchus masou (Cherry salmon).